The sequence spans 979 residues: Translation initiation factor IF-2 (979 aa).

A disordered region spans residues 68–386 (VKQKQGTPAS…DKRDAASRAA (319 aa)). 3 stretches are compositionally biased toward basic and acidic residues: residues 102–179 (QDMR…KPEE), 217–229 (EMEK…EVFR), and 260–273 (TKED…DADG). Residues 317-326 (RPAQQQSNAS) are compositionally biased toward polar residues. Positions 347–356 (DVQRQVKETL) are enriched in basic and acidic residues. A tr-type G domain is found at 478–646 (ARPPIVTVMG…KVLLEADILE (169 aa)). The tract at residues 487-494 (GHVDHGKT) is G1. Position 487-494 (487-494 (GHVDHGKT)) interacts with GTP. The interval 512–516 (GITQH) is G2. Positions 534 to 537 (DTPG) are G3. GTP is bound by residues 534–538 (DTPGH) and 588–591 (NKID). The interval 588–591 (NKID) is G4. Residues 624-626 (SAK) form a G5 region.

Belongs to the TRAFAC class translation factor GTPase superfamily. Classic translation factor GTPase family. IF-2 subfamily.

The protein resides in the cytoplasm. Its function is as follows. One of the essential components for the initiation of protein synthesis. Protects formylmethionyl-tRNA from spontaneous hydrolysis and promotes its binding to the 30S ribosomal subunits. Also involved in the hydrolysis of GTP during the formation of the 70S ribosomal complex. The chain is Translation initiation factor IF-2 from Porphyromonas gingivalis (strain ATCC BAA-308 / W83).